The sequence spans 161 residues: Regulator of ribonuclease activity A (161 aa).

This sequence belongs to the RraA family. As to quaternary structure, homotrimer. Binds to both RNA-binding sites in the C-terminal region of Rne and to RhlB.

The protein localises to the cytoplasm. Its function is as follows. Globally modulates RNA abundance by binding to RNase E (Rne) and regulating its endonucleolytic activity. Can modulate Rne action in a substrate-dependent manner by altering the composition of the degradosome. Modulates RNA-binding and helicase activities of the degradosome. This is Regulator of ribonuclease activity A from Sodalis glossinidius (strain morsitans).